Reading from the N-terminus, the 288-residue chain is uncharacterized protein (288 aa).

Residues 92–112 (LPTILVILGVIVVIAIVYAII) traverse the membrane as a helical segment. Positions 121-183 (DDHNAASEKA…NDSEKLEIKA (63 aa)) are disordered. Basic and acidic residues-rich tracts occupy residues 136–146 (SKYEIPKDSTL) and 154–181 (SEKETDTKKETKENEDKKKENDSEKLEI). The stretch at 147-185 (KENQNNSSEKETDTKKETKENEDKKKENDSEKLEIKAAG) forms a coiled coil.

Its subcellular location is the cell membrane. This is an uncharacterized protein from Bacillus subtilis (strain 168).